The following is an 87-amino-acid chain: U3-theraphotoxin-Hhn1b (87 aa).

The signal sequence occupies residues 1–24 (MVNMKASMFLTFAGLVLLFVVCYA). The propeptide occupies 25-52 (SESEEKEFPREMLSSIFAVDNDFKQEER). 2 cysteine pairs are disulfide-bonded: C54–C67 and C61–C72.

It belongs to the neurotoxin 10 (Hwtx-1) family. 51 (Hntx-8) subfamily. Hntx-8 sub-subfamily. As to expression, expressed by the venom gland.

It localises to the secreted. Ion channel inhibitor. The polypeptide is U3-theraphotoxin-Hhn1b (Cyriopagopus hainanus (Chinese bird spider)).